A 101-amino-acid chain; its full sequence is uncharacterized protein (101 aa).

This is an uncharacterized protein from Methanocaldococcus jannaschii (strain ATCC 43067 / DSM 2661 / JAL-1 / JCM 10045 / NBRC 100440) (Methanococcus jannaschii).